Here is a 122-residue protein sequence, read N- to C-terminus: Ribosome-binding factor A (122 aa).

Belongs to the RbfA family. In terms of assembly, monomer. Binds 30S ribosomal subunits, but not 50S ribosomal subunits or 70S ribosomes.

The protein resides in the cytoplasm. In terms of biological role, one of several proteins that assist in the late maturation steps of the functional core of the 30S ribosomal subunit. Associates with free 30S ribosomal subunits (but not with 30S subunits that are part of 70S ribosomes or polysomes). Required for efficient processing of 16S rRNA. May interact with the 5'-terminal helix region of 16S rRNA. The chain is Ribosome-binding factor A from Geotalea uraniireducens (strain Rf4) (Geobacter uraniireducens).